Here is a 61-residue protein sequence, read N- to C-terminus: Small ribosomal subunit protein uS14 (61 aa).

Residues Cys24, Cys27, Cys40, and Cys43 each coordinate Zn(2+).

The protein belongs to the universal ribosomal protein uS14 family. Zinc-binding uS14 subfamily. Part of the 30S ribosomal subunit. Contacts proteins S3 and S10. It depends on Zn(2+) as a cofactor.

In terms of biological role, binds 16S rRNA, required for the assembly of 30S particles and may also be responsible for determining the conformation of the 16S rRNA at the A site. This chain is Small ribosomal subunit protein uS14, found in Thermus thermophilus (strain ATCC BAA-163 / DSM 7039 / HB27).